A 469-amino-acid chain; its full sequence is Exodeoxyribonuclease 7 large subunit (469 aa).

The protein belongs to the XseA family. As to quaternary structure, heterooligomer composed of large and small subunits.

The protein localises to the cytoplasm. It carries out the reaction Exonucleolytic cleavage in either 5'- to 3'- or 3'- to 5'-direction to yield nucleoside 5'-phosphates.. Functionally, bidirectionally degrades single-stranded DNA into large acid-insoluble oligonucleotides, which are then degraded further into small acid-soluble oligonucleotides. The polypeptide is Exodeoxyribonuclease 7 large subunit (Mycoplasma mycoides subsp. mycoides SC (strain CCUG 32753 / NCTC 10114 / PG1)).